A 185-amino-acid polypeptide reads, in one-letter code: Large ribosomal subunit protein uL5 (185 aa).

It belongs to the universal ribosomal protein uL5 family. As to quaternary structure, part of the 50S ribosomal subunit; part of the 5S rRNA/L5/L18/L25 subcomplex. Contacts the 5S rRNA and the P site tRNA. Forms a bridge to the 30S subunit in the 70S ribosome.

In terms of biological role, this is one of the proteins that bind and probably mediate the attachment of the 5S RNA into the large ribosomal subunit, where it forms part of the central protuberance. In the 70S ribosome it contacts protein S13 of the 30S subunit (bridge B1b), connecting the 2 subunits; this bridge is implicated in subunit movement. Contacts the P site tRNA; the 5S rRNA and some of its associated proteins might help stabilize positioning of ribosome-bound tRNAs. This chain is Large ribosomal subunit protein uL5, found in Bradyrhizobium diazoefficiens (strain JCM 10833 / BCRC 13528 / IAM 13628 / NBRC 14792 / USDA 110).